The sequence spans 911 residues: Pesticidal crystal protein Cry1Af (911 aa).

This sequence belongs to the delta endotoxin family.

Functionally, promotes colloidosmotic lysis by binding to the midgut epithelial cells of both dipteran and lepidopteran larvae. In Bacillus thuringiensis, this protein is Pesticidal crystal protein Cry1Af (cry1Af).